Consider the following 288-residue polypeptide: Proteasome assembly chaperone 1 (288 aa).

The residue at position 2 (alanine 2) is an N-acetylalanine. A disordered region spans residues 12 to 38 (TPCRAGTEEEEEEEDGNRETPEDREVR). Residue threonine 18 is modified to Phosphothreonine. Residues 28–38 (NRETPEDREVR) show a composition bias toward basic and acidic residues. Threonine 54 carries the phosphothreonine modification. Serine 180 bears the Phosphoserine mark. Lysine 264 is modified (N6-acetyllysine).

It belongs to the PSMG1 family. Forms a heterodimer with PSMG2. The PSMG1-PSMG2 heterodimer interacts directly with the PSMA5 and PSMA7 proteasome alpha subunits. Degraded by the proteasome upon completion of 20S proteasome maturation.

It is found in the cytoplasm. The protein resides in the endoplasmic reticulum. In terms of biological role, chaperone protein which promotes assembly of the 20S proteasome as part of a heterodimer with PSMG2. The PSMG1-PSMG2 heterodimer binds to the PSMA5 and PSMA7 proteasome subunits, promotes assembly of the proteasome alpha subunits into the heteroheptameric alpha ring and prevents alpha ring dimerization. The protein is Proteasome assembly chaperone 1 of Bos taurus (Bovine).